The primary structure comprises 533 residues: Na(+)/H(+) antiporter NhaB (533 aa).

A run of 10 helical transmembrane segments spans residues 28–50, 67–87, 96–116, 131–165, 254–274, 316–336, 364–384, 396–416, 454–474, and 481–501; these read FLIINPLLFFYVDPFVAGWVLVL, PGGLLAIEAVAIGMTSASQVL, VLLLLVFMVAGIYFMKQLLLF, VSLMFCLASAFLSAFLDALTVIAVIIAVAVGFYSI, VPVLISGILTCYLVEKFGIFG, LIAGLALHLASVGLIGLSVII, LAVFFAVVGVIIDQHLFAPVI, LVIFYIANGLLSMVSDNVFVG, ATPNGQAAFLFLLTSALAPLI, and MVWMALPYTIVLSIVGVMAIQ.

This sequence belongs to the NhaB Na(+)/H(+) (TC 2.A.34) antiporter family.

It is found in the cell inner membrane. It carries out the reaction 2 Na(+)(in) + 3 H(+)(out) = 2 Na(+)(out) + 3 H(+)(in). Functionally, na(+)/H(+) antiporter that extrudes sodium in exchange for external protons. The polypeptide is Na(+)/H(+) antiporter NhaB (Shewanella baltica (strain OS195)).